The following is a 217-amino-acid chain: UPF0319 protein VP1009 (217 aa).

The N-terminal stretch at 1–21 (MRLKTWIVAFFLGLFGTTVNA) is a signal peptide.

Belongs to the UPF0319 family.

The polypeptide is UPF0319 protein VP1009 (Vibrio parahaemolyticus serotype O3:K6 (strain RIMD 2210633)).